Here is a 280-residue protein sequence, read N- to C-terminus: Type 1 encapsulin shell protein (280 aa).

The protein belongs to the encapsulin family. Family 1 subfamily. In terms of assembly, this encapsulin nanocompartment is formed by 60 subunits; monomers form pentamers which assemble to form shells. There are 12 pores where the pentamers meet as well as 3-fold axis channels and dimer channels; none are larger than 3-4 Angstroms in diameter. The N-terminus of the protein is inside the shell, the C-terminus is outside.

The protein resides in the encapsulin nanocompartment. Shell component of a type 1 encapsulin nanocompartment. Assembles into proteinaceous icosahedral shells 24 nm in diameter in the presence and absence of its ferritin cargo protein. The center of cargo-loaded nanocompartments is loaded with iron. The empty encapsulin nanocompartment sequesters about 2200 Fe ions while the cargo-loaded nanocompartment can maximally sequester about 4150 Fe ions. Does not have any detectable ferroxidase activity. In Rhodospirillum rubrum (strain ATCC 11170 / ATH 1.1.1 / DSM 467 / LMG 4362 / NCIMB 8255 / S1), this protein is Type 1 encapsulin shell protein.